The following is a 357-amino-acid chain: Tetraacyldisaccharide 4'-kinase (357 aa).

49–56 serves as a coordination point for ATP; sequence TIGGTGKT.

Belongs to the LpxK family.

The enzyme catalyses a lipid A disaccharide + ATP = a lipid IVA + ADP + H(+). It participates in glycolipid biosynthesis; lipid IV(A) biosynthesis; lipid IV(A) from (3R)-3-hydroxytetradecanoyl-[acyl-carrier-protein] and UDP-N-acetyl-alpha-D-glucosamine: step 6/6. Functionally, transfers the gamma-phosphate of ATP to the 4'-position of a tetraacyldisaccharide 1-phosphate intermediate (termed DS-1-P) to form tetraacyldisaccharide 1,4'-bis-phosphate (lipid IVA). In Porphyromonas gingivalis (strain ATCC BAA-308 / W83), this protein is Tetraacyldisaccharide 4'-kinase.